Reading from the N-terminus, the 361-residue chain is F-box protein pof7 (361 aa).

The 53-residue stretch at 105–157 folds into the F-box domain; the sequence is NESVVPNILKLPDEVLLVILENCIRDLHDLRYLSSIALTCKHFAKALRADSLY.

In terms of assembly, interacts with skp1.

The protein resides in the cytoplasm. The chain is F-box protein pof7 (pof7) from Schizosaccharomyces pombe (strain 972 / ATCC 24843) (Fission yeast).